The sequence spans 310 residues: Methionyl-tRNA formyltransferase (310 aa).

Ser-106–Pro-109 is a (6S)-5,6,7,8-tetrahydrofolate binding site.

The protein belongs to the Fmt family.

It carries out the reaction L-methionyl-tRNA(fMet) + (6R)-10-formyltetrahydrofolate = N-formyl-L-methionyl-tRNA(fMet) + (6S)-5,6,7,8-tetrahydrofolate + H(+). In terms of biological role, attaches a formyl group to the free amino group of methionyl-tRNA(fMet). The formyl group appears to play a dual role in the initiator identity of N-formylmethionyl-tRNA by promoting its recognition by IF2 and preventing the misappropriation of this tRNA by the elongation apparatus. This is Methionyl-tRNA formyltransferase from Fervidobacterium nodosum (strain ATCC 35602 / DSM 5306 / Rt17-B1).